Reading from the N-terminus, the 211-residue chain is uncharacterized protein (211 aa).

The disordered stretch occupies residues 155–211; the sequence is AAENASEEGDKKQIITDSGKLPETEELTETTNEDLDIKQFSPYSSESSANVSSYNKS. Acidic residues predominate over residues 178 to 188; that stretch reads TEELTETTNED. The span at 195–211 shows a compositional bias: low complexity; it reads SPYSSESSANVSSYNKS.

This is an uncharacterized protein from Schizosaccharomyces pombe (strain 972 / ATCC 24843) (Fission yeast).